The primary structure comprises 284 residues: Tropomyosin (284 aa).

The disordered stretch occupies residues 1–54 (MDAIKKKMQAMKLEKDNAMDRADTLEQQNKEANNRAEKTEEEIRATQKKMQQVE). A coiled-coil region spans residues 1–273 (MDAIKKKMQA…KEKYKSITDE (273 aa)). Residues 12 to 45 (KLEKDNAMDRADTLEQQNKEANNRAEKTEEEIRA) show a composition bias toward basic and acidic residues.

It belongs to the tropomyosin family. Homodimer. Muscle (at protein level). Expressed in leg and chest protection muscle (at protein level). Expressed in claw muscle.

Tropomyosin, in association with the troponin complex, plays a central role in the calcium dependent regulation of muscle contraction. This chain is Tropomyosin, found in Eriocheir sinensis (Chinese mitten crab).